The chain runs to 214 residues: tRNA (guanine-N(7)-)-methyltransferase (214 aa).

S-adenosyl-L-methionine is bound by residues glutamate 44, aspartate 69, aspartate 96, and aspartate 118. Aspartate 118 is a catalytic residue. Lysine 122 lines the substrate pocket. An interaction with RNA region spans residues 124-129 (KHEKRR). Residues aspartate 154 and 191-194 (TEYE) each bind substrate.

Belongs to the class I-like SAM-binding methyltransferase superfamily. TrmB family.

It carries out the reaction guanosine(46) in tRNA + S-adenosyl-L-methionine = N(7)-methylguanosine(46) in tRNA + S-adenosyl-L-homocysteine. It participates in tRNA modification; N(7)-methylguanine-tRNA biosynthesis. In terms of biological role, catalyzes the formation of N(7)-methylguanine at position 46 (m7G46) in tRNA. The sequence is that of tRNA (guanine-N(7)-)-methyltransferase from Enterococcus faecalis (strain ATCC 700802 / V583).